The following is a 94-amino-acid chain: Large ribosomal subunit protein bL27 (94 aa).

Positions 1-25 are disordered; that stretch reads MAHKKGTGSTRNGRDSQSKRLGVKR.

The protein belongs to the bacterial ribosomal protein bL27 family.

The sequence is that of Large ribosomal subunit protein bL27 from Gloeothece citriformis (strain PCC 7424) (Cyanothece sp. (strain PCC 7424)).